The following is a 371-amino-acid chain: 4-hydroxy-3-methylbut-2-en-1-yl diphosphate synthase (flavodoxin) (371 aa).

4 residues coordinate [4Fe-4S] cluster: C270, C273, C305, and E312.

It belongs to the IspG family. It depends on [4Fe-4S] cluster as a cofactor.

It catalyses the reaction (2E)-4-hydroxy-3-methylbut-2-enyl diphosphate + oxidized [flavodoxin] + H2O + 2 H(+) = 2-C-methyl-D-erythritol 2,4-cyclic diphosphate + reduced [flavodoxin]. The protein operates within isoprenoid biosynthesis; isopentenyl diphosphate biosynthesis via DXP pathway; isopentenyl diphosphate from 1-deoxy-D-xylulose 5-phosphate: step 5/6. Its function is as follows. Converts 2C-methyl-D-erythritol 2,4-cyclodiphosphate (ME-2,4cPP) into 1-hydroxy-2-methyl-2-(E)-butenyl 4-diphosphate. The sequence is that of 4-hydroxy-3-methylbut-2-en-1-yl diphosphate synthase (flavodoxin) from Shewanella baltica (strain OS223).